Here is a 210-residue protein sequence, read N- to C-terminus: Ribosomal RNA large subunit methyltransferase E (210 aa).

Residues Gly61, Trp63, Asp81, Asp97, and Asp122 each coordinate S-adenosyl-L-methionine. Residue Lys162 is the Proton acceptor of the active site. Residues Lys187–Pro196 show a composition bias toward basic and acidic residues. The disordered stretch occupies residues Lys187–Lys210.

Belongs to the class I-like SAM-binding methyltransferase superfamily. RNA methyltransferase RlmE family.

The protein resides in the cytoplasm. It carries out the reaction uridine(2552) in 23S rRNA + S-adenosyl-L-methionine = 2'-O-methyluridine(2552) in 23S rRNA + S-adenosyl-L-homocysteine + H(+). Functionally, specifically methylates the uridine in position 2552 of 23S rRNA at the 2'-O position of the ribose in the fully assembled 50S ribosomal subunit. The protein is Ribosomal RNA large subunit methyltransferase E of Stenotrophomonas maltophilia (strain K279a).